Consider the following 972-residue polypeptide: Glycine dehydrogenase (decarboxylating) (972 aa).

At lysine 713 the chain carries N6-(pyridoxal phosphate)lysine.

Belongs to the GcvP family. In terms of assembly, the glycine cleavage system is composed of four proteins: P, T, L and H. It depends on pyridoxal 5'-phosphate as a cofactor.

The enzyme catalyses N(6)-[(R)-lipoyl]-L-lysyl-[glycine-cleavage complex H protein] + glycine + H(+) = N(6)-[(R)-S(8)-aminomethyldihydrolipoyl]-L-lysyl-[glycine-cleavage complex H protein] + CO2. Its function is as follows. The glycine cleavage system catalyzes the degradation of glycine. The P protein binds the alpha-amino group of glycine through its pyridoxal phosphate cofactor; CO(2) is released and the remaining methylamine moiety is then transferred to the lipoamide cofactor of the H protein. This is Glycine dehydrogenase (decarboxylating) from Aromatoleum aromaticum (strain DSM 19018 / LMG 30748 / EbN1) (Azoarcus sp. (strain EbN1)).